Here is a 763-residue protein sequence, read N- to C-terminus: Disintegrin and metalloproteinase domain-containing protein 29 (763 aa).

The signal sequence occupies residues 1–31; that stretch reads MNMIEALLSMRVLFLTQVFGIFLCFPGLTKA. Positions 32–200 are excised as a propeptide; that stretch reads GHLHYHSSIE…ILKQSSFEDW (169 aa). 3 N-linked (GlcNAc...) asparagine glycosylation sites follow: asparagine 164, asparagine 177, and asparagine 223. Residues 201-684 are Extracellular-facing; the sequence is WTHTKIVELV…KTNKKKHFFY (484 aa). Positions 205-396 constitute a Peptidase M12B domain; the sequence is KIVELVVVVD…NTRCLMENMY (192 aa). Disulfide bonds link cysteine 313–cysteine 390, cysteine 353–cysteine 375, and cysteine 355–cysteine 360. Residues asparagine 374, asparagine 424, asparagine 434, asparagine 475, and asparagine 584 are each glycosylated (N-linked (GlcNAc...) asparagine). The Disintegrin domain maps to 403–489; sequence RTRCGNGVVE…ECPDDAYVED (87 aa). A disulfide bond links cysteine 461 and cysteine 481. 3 disulfide bridges follow: cysteine 631–cysteine 642, cysteine 636–cysteine 648, and cysteine 650–cysteine 659. Positions 631–660 constitute an EGF-like domain; sequence CTPAFCNYRGICNNKHHCHCNFHWDPPNCM. Residues 685–705 traverse the membrane as a helical segment; the sequence is LLLLQLIILACLLSCLLWLLF. Over 706–763 the chain is Cytoplasmic; it reads NIKGSKRKPQVQPTPVKTKKVSKKVPSQKPSPVPSPSLPQLRMPSRSASPTSSIKSTN. The segment at 712-763 is disordered; the sequence is RKPQVQPTPVKTKKVSKKVPSQKPSPVPSPSLPQLRMPSRSASPTSSIKSTN. Residues 751–763 are compositionally biased toward polar residues; it reads RSASPTSSIKSTN.

The protein resides in the membrane. May be involved in spermatogenesis and fertilization. Seems to be a non catalytic metalloprotease-like protein. The sequence is that of Disintegrin and metalloproteinase domain-containing protein 29 (Adam29) from Mus musculus (Mouse).